The chain runs to 259 residues: Protein GrpE (259 aa).

2 disordered regions span residues 1-75 (MNSD…KGSD) and 227-259 (GPGP…KDEN). Positions 20 to 40 (NNPSENFVSSSNSNESVNQVE) are enriched in low complexity. A compositionally biased stretch (basic and acidic residues) spans 46–60 (EVEHQVKNDSVDTAK). Polar residues predominate over residues 61–73 (EQSSTSCESNIKG).

This sequence belongs to the GrpE family. As to quaternary structure, homodimer.

The protein localises to the cytoplasm. Its function is as follows. Participates actively in the response to hyperosmotic and heat shock by preventing the aggregation of stress-denatured proteins, in association with DnaK and GrpE. It is the nucleotide exchange factor for DnaK and may function as a thermosensor. Unfolded proteins bind initially to DnaJ; upon interaction with the DnaJ-bound protein, DnaK hydrolyzes its bound ATP, resulting in the formation of a stable complex. GrpE releases ADP from DnaK; ATP binding to DnaK triggers the release of the substrate protein, thus completing the reaction cycle. Several rounds of ATP-dependent interactions between DnaJ, DnaK and GrpE are required for fully efficient folding. This is Protein GrpE from Prochlorococcus marinus (strain NATL1A).